Reading from the N-terminus, the 489-residue chain is UDP-N-acetylmuramate--L-alanine ligase (489 aa).

128 to 134 serves as a coordination point for ATP; the sequence is GTHGKTT.

Belongs to the MurCDEF family.

The protein resides in the cytoplasm. The enzyme catalyses UDP-N-acetyl-alpha-D-muramate + L-alanine + ATP = UDP-N-acetyl-alpha-D-muramoyl-L-alanine + ADP + phosphate + H(+). It functions in the pathway cell wall biogenesis; peptidoglycan biosynthesis. In terms of biological role, cell wall formation. This chain is UDP-N-acetylmuramate--L-alanine ligase, found in Shewanella halifaxensis (strain HAW-EB4).